Reading from the N-terminus, the 316-residue chain is Taste receptor type 2 member 109 (316 aa).

Residues 1-14 (MEHLLKRTFDITEN) lie on the Extracellular side of the membrane. Residues 15–35 (ILLIILFIELIIGLIGNGFTA) form a helical membrane-spanning segment. Residues 36–62 (LVHCMDWVKRKKMSLVNKILTALATSR) are Cytoplasmic-facing. A helical membrane pass occupies residues 63 to 83 (IFLLWFMLVGFPISSLYPYLV). Residues 84–94 (TTRLMIQFTST) are Extracellular-facing. The helical transmembrane segment at 95-115 (LWTIANHISVWFATCLSVFYF) threads the bilayer. Over 116–135 (LKIANFSNSPFLYLKRRVEK) the chain is Cytoplasmic. The chain crosses the membrane as a helical span at residues 136–156 (VVSVTLLVSLVLLFLNILLLN). Topologically, residues 157-191 (LEINMCINEYHQINISYIFISYYHLSCQIQVLGSH) are extracellular. N-linked (GlcNAc...) asparagine glycosylation is present at asparagine 170. A helical transmembrane segment spans residues 192-212 (IIFLSVPVVLSLSTFLLLIFS). The Cytoplasmic portion of the chain corresponds to 213–241 (LWTLHKRMQQHVQGGRDARTTAHFKALQA). A helical membrane pass occupies residues 242 to 262 (VIAFLLLYSIFILSLLLQFWI). The Extracellular segment spans residues 263-270 (HGLRKKPP). A helical transmembrane segment spans residues 271–291 (FIAFCQVVDTAFPSFHSYVLI). At 292 to 316 (LRDRKLRHASLSVLSWLKCRPNYVK) the chain is on the cytoplasmic side.

This sequence belongs to the G-protein coupled receptor T2R family.

The protein resides in the membrane. Its function is as follows. Putative taste receptor which may play a role in the perception of bitterness. The polypeptide is Taste receptor type 2 member 109 (Mus musculus (Mouse)).